A 421-amino-acid polypeptide reads, in one-letter code: Polygalacturonase (421 aa).

A signal peptide spans 1 to 20 (MKFSTAIIVSFLFIADFCAA). Asparagine 156 and asparagine 180 each carry an N-linked (GlcNAc...) asparagine glycan. 2 PbH1 repeats span residues 178-204 (CKNI…HMGK) and 205-226 (STDV…SIGD). Residue aspartate 219 is the Proton donor of the active site. The active site involves histidine 242. PbH1 repeat units lie at residues 258-279 (VEGI…RIKT) and 289-310 (VSDI…IIDQ). Asparagine 265 is a glycosylation site (N-linked (GlcNAc...) asparagine). Residues 394-421 (PGAPAASTTATPAASKTATPAAGKSPAK) form a disordered region.

The protein belongs to the glycosyl hydrolase 28 family. In terms of tissue distribution, pollen specific.

The protein resides in the secreted. It localises to the cell wall. It catalyses the reaction (1,4-alpha-D-galacturonosyl)n+m + H2O = (1,4-alpha-D-galacturonosyl)n + (1,4-alpha-D-galacturonosyl)m.. May function in the depolymerization of the pectin in its walls during pollen tube elongation, or in that of the pistil during pollination. This Medicago sativa (Alfalfa) protein is Polygalacturonase.